The sequence spans 246 residues: Protein-lysine N-methyltransferase EFM6 (246 aa).

S-adenosyl-L-methionine-binding positions include W51, 87–89 (GSG), D115, W143, and A169.

Belongs to the class I-like SAM-binding methyltransferase superfamily. METTL21 family. EFM6 subfamily.

Its subcellular location is the cytoplasm. Functionally, S-adenosyl-L-methionine-dependent protein-lysine N-methyltransferase that methylates elongation factor 1-alpha (TEF1 and TEF2) at 'Lys-390'. This chain is Protein-lysine N-methyltransferase EFM6, found in Saccharomyces cerevisiae (strain ATCC 204508 / S288c) (Baker's yeast).